The primary structure comprises 530 residues: Phosphoenolpyruvate carboxykinase (ATP) (530 aa).

Residues Arg-58, Tyr-195, and Lys-201 each contribute to the substrate site. ATP-binding positions include Lys-201, His-220, and 236 to 244 (GLSGTGKTT). Residues Lys-201 and His-220 each coordinate Mn(2+). Position 257 (Asp-257) interacts with Mn(2+). ATP contacts are provided by residues Glu-285, Arg-321, 440 to 441 (RI), and Thr-446. Arg-321 is a substrate binding site.

This sequence belongs to the phosphoenolpyruvate carboxykinase (ATP) family. Mn(2+) serves as cofactor.

The protein resides in the cytoplasm. It carries out the reaction oxaloacetate + ATP = phosphoenolpyruvate + ADP + CO2. Its pathway is carbohydrate biosynthesis; gluconeogenesis. In terms of biological role, involved in the gluconeogenesis. Catalyzes the conversion of oxaloacetate (OAA) to phosphoenolpyruvate (PEP) through direct phosphoryl transfer between the nucleoside triphosphate and OAA. The sequence is that of Phosphoenolpyruvate carboxykinase (ATP) from Staphylococcus aureus (strain MRSA252).